Here is a 278-residue protein sequence, read N- to C-terminus: 3-methyl-2-oxobutanoate hydroxymethyltransferase (278 aa).

The Mg(2+) site is built by aspartate 43 and aspartate 82. Residues 43 to 44, aspartate 82, and lysine 112 each bind 3-methyl-2-oxobutanoate; that span reads DS. Glutamate 114 contributes to the Mg(2+) binding site. The active-site Proton acceptor is the glutamate 181.

Belongs to the PanB family. In terms of assembly, homodecamer; pentamer of dimers. Requires Mg(2+) as cofactor.

It is found in the cytoplasm. The catalysed reaction is 3-methyl-2-oxobutanoate + (6R)-5,10-methylene-5,6,7,8-tetrahydrofolate + H2O = 2-dehydropantoate + (6S)-5,6,7,8-tetrahydrofolate. The protein operates within cofactor biosynthesis; (R)-pantothenate biosynthesis; (R)-pantoate from 3-methyl-2-oxobutanoate: step 1/2. Its function is as follows. Catalyzes the reversible reaction in which hydroxymethyl group from 5,10-methylenetetrahydrofolate is transferred onto alpha-ketoisovalerate to form ketopantoate. The sequence is that of 3-methyl-2-oxobutanoate hydroxymethyltransferase from Desulfitobacterium hafniense (strain DSM 10664 / DCB-2).